A 244-amino-acid chain; its full sequence is MKGIRKSILCLVLSAGVIAPVTTSIVQSPQKCYACTVDKGSYADTFTEFTNVEEAKKWGNAQYKKYGLSKPEQEAIKFYTRDASKINGPLRANQGNENGLPADILQKVKLIDQSFSKMKMPQNIILFRGDDPAYLGPEFQDKILNKDGTINKTVFEQVKAKFLKKDRTEYGYISTSLMSAQFGGRPIVTKFKVTNGSKGGYIDPISYFPGQLEVLLPRNNSYYISDMQISPNNRQIMITAMIFK.

An N-terminal signal peptide occupies residues methionine 1–glycine 40. A TR mART core domain is found at aspartate 44–lysine 244. Residues threonine 80, asparagine 87, arginine 91, arginine 128–aspartate 131, and arginine 167–glutamate 169 contribute to the NAD(+) site. Arginine 128 is an active-site residue. Residue serine 174 is part of the active site. Residues phenylalanine 182–arginine 185 and glutamine 211–glutamate 213 each bind NAD(+). Glutamate 213 is an active-site residue.

The protein to exoenzymes 3 of C.limosum and C.botulinum D phage, and to S.aureus ediN. Monomer.

It localises to the secreted. The catalysed reaction is L-asparaginyl-[protein] + NAD(+) = N(4)-(ADP-D-ribosyl)-L-asparaginyl-[protein] + nicotinamide + H(+). Its function is as follows. ADP-ribosylates eukaryotic Rho and Rac proteins on an asparagine residue. The chain is Mono-ADP-ribosyltransferase C3 from Clostridium botulinum C phage (Clostridium botulinum C bacteriophage).